Reading from the N-terminus, the 206-residue chain is MVKIPCIYENGQIEDIEASESVFGRVYNEALVHQVVKSYLANARAGTRAQKGRSDVTGSTRKQWRQKGTGRARTGAATNPLWRGGGKIFPNKPTENFKQKLNRKMYRAGMCTIFSELLRNNKLVAIDEFQIEMPKTKVCLQKLKNYQLENVMIITSEIDSNLYLASRNLPNLKVVEVDLIDPVSLLAYDNVVITRDTVNKIENVLQ.

Residues 47–77 (TRAQKGRSDVTGSTRKQWRQKGTGRARTGAA) are disordered.

The protein belongs to the universal ribosomal protein uL4 family. In terms of assembly, part of the 50S ribosomal subunit.

Functionally, one of the primary rRNA binding proteins, this protein initially binds near the 5'-end of the 23S rRNA. It is important during the early stages of 50S assembly. It makes multiple contacts with different domains of the 23S rRNA in the assembled 50S subunit and ribosome. Its function is as follows. Forms part of the polypeptide exit tunnel. This chain is Large ribosomal subunit protein uL4, found in Nitrosomonas europaea (strain ATCC 19718 / CIP 103999 / KCTC 2705 / NBRC 14298).